The chain runs to 387 residues: Acetylserotonin O-methyltransferase (387 aa).

Residues Tyr153, Trp170, Glu216, 246–248 (GDF), and Arg263 contribute to the S-adenosyl-L-methionine site. His266 (proton donor/acceptor) is an active-site residue. Residues Asp267 and Gln317 each contribute to the substrate site. The disordered stretch occupies residues 354–387 (AARGGGAGARSDGGGGDATSQTGSGTGSEVGAQD). Over residues 356 to 370 (RGGGAGARSDGGGGD) the composition is skewed to gly residues.

This sequence belongs to the class I-like SAM-binding methyltransferase superfamily. Cation-independent O-methyltransferase family. As to quaternary structure, homodimer. In terms of tissue distribution, expressed predominantly in the pineal gland (at protein level). Very low expression, if any, in the retina.

It carries out the reaction N-acetylserotonin + S-adenosyl-L-methionine = melatonin + S-adenosyl-L-homocysteine + H(+). It functions in the pathway aromatic compound metabolism; melatonin biosynthesis; melatonin from serotonin: step 1/2. Functionally, catalyzes the transfer of a methyl group onto N-acetylserotonin, producing melatonin (N-acetyl-5-methoxytryptamine). The sequence is that of Acetylserotonin O-methyltransferase (Asmt) from Mus musculus (Mouse).